Here is a 670-residue protein sequence, read N- to C-terminus: Transcription factor vib-1 (670 aa).

A DNA-binding region (NDT80) is located at residues 106 to 341 (TEMVQDLRDD…RSPRNFQARK (236 aa)). Polar residues-rich tracts occupy residues 394–438 (FTSA…TTSM) and 553–568 (LGNS…QHHP). Disordered stretches follow at residues 394 to 457 (FTSA…SYTA) and 496 to 670 (SAPP…WNAT). Residues 592-605 (ASAPASAPTSAAPP) are compositionally biased toward low complexity. Residues 611-631 (PSQSWTSTAGEGQTSSYTNGG) show a composition bias toward polar residues.

Its subcellular location is the nucleus. The protein localises to the cytoplasm. Transcription factor that acts as a positive regulator of nonrepressible acid phosphatase activity. Is a major regulator of responses to nitrogen and carbon starvation and is essential for the expression of genes involved in vegetative incompatibility (like pin-c, het-6, and tol). Vegetative incompatibility is a non-self-recognition system ubiquitous in filamentous fungi which results in programmed cell death. In Neurospora crassa (strain ATCC 24698 / 74-OR23-1A / CBS 708.71 / DSM 1257 / FGSC 987), this protein is Transcription factor vib-1 (vib-1).